A 307-amino-acid chain; its full sequence is Aspartate carbamoyltransferase catalytic subunit (307 aa).

Residues R59 and T60 each contribute to the carbamoyl phosphate site. K87 serves as a coordination point for L-aspartate. R109, H137, and Q140 together coordinate carbamoyl phosphate. L-aspartate contacts are provided by R173 and R223. 2 residues coordinate carbamoyl phosphate: G266 and P267.

This sequence belongs to the aspartate/ornithine carbamoyltransferase superfamily. ATCase family. Heterododecamer (2C3:3R2) of six catalytic PyrB chains organized as two trimers (C3), and six regulatory PyrI chains organized as three dimers (R2).

The catalysed reaction is carbamoyl phosphate + L-aspartate = N-carbamoyl-L-aspartate + phosphate + H(+). Its pathway is pyrimidine metabolism; UMP biosynthesis via de novo pathway; (S)-dihydroorotate from bicarbonate: step 2/3. Its function is as follows. Catalyzes the condensation of carbamoyl phosphate and aspartate to form carbamoyl aspartate and inorganic phosphate, the committed step in the de novo pyrimidine nucleotide biosynthesis pathway. This chain is Aspartate carbamoyltransferase catalytic subunit, found in Helicobacter pylori (strain G27).